The following is a 775-amino-acid chain: 5-methyltetrahydropteroyltriglutamate--homocysteine methyltransferase (775 aa).

5-methyltetrahydropteroyltri-L-glutamate is bound by residues 16–19 and Lys-115; that span reads REMK. L-homocysteine contacts are provided by residues 435–437 and Glu-488; that span reads IGS. L-methionine is bound by residues 435–437 and Glu-488; that span reads IGS. Residues 519–520 and Trp-565 each bind 5-methyltetrahydropteroyltri-L-glutamate; that span reads RC. Asp-603 provides a ligand contact to L-homocysteine. Residue Asp-603 coordinates L-methionine. Glu-609 contacts 5-methyltetrahydropteroyltri-L-glutamate. Positions 645, 647, and 669 each coordinate Zn(2+). Catalysis depends on His-698, which acts as the Proton donor. Cys-730 contributes to the Zn(2+) binding site.

Belongs to the vitamin-B12 independent methionine synthase family. The cofactor is Zn(2+).

The catalysed reaction is 5-methyltetrahydropteroyltri-L-glutamate + L-homocysteine = tetrahydropteroyltri-L-glutamate + L-methionine. It functions in the pathway amino-acid biosynthesis; L-methionine biosynthesis via de novo pathway; L-methionine from L-homocysteine (MetE route): step 1/1. Functionally, catalyzes the transfer of a methyl group from 5-methyltetrahydrofolate to homocysteine resulting in methionine formation. This Coxiella burnetii (strain Dugway 5J108-111) protein is 5-methyltetrahydropteroyltriglutamate--homocysteine methyltransferase.